The primary structure comprises 607 residues: Aspartate--tRNA(Asp/Asn) ligase (607 aa).

Glu-194 lines the L-aspartate pocket. The aspartate stretch occupies residues 218–221 (QLFK). Arg-240 is a binding site for L-aspartate. Residues 240-242 (RDE) and Gln-249 contribute to the ATP site. His-468 contributes to the L-aspartate binding site. Glu-502 contacts ATP. L-aspartate is bound at residue Arg-509. Residue 554–557 (GLDR) coordinates ATP.

The protein belongs to the class-II aminoacyl-tRNA synthetase family. Type 1 subfamily. As to quaternary structure, homodimer.

Its subcellular location is the cytoplasm. The enzyme catalyses tRNA(Asx) + L-aspartate + ATP = L-aspartyl-tRNA(Asx) + AMP + diphosphate. Its function is as follows. Aspartyl-tRNA synthetase with relaxed tRNA specificity since it is able to aspartylate not only its cognate tRNA(Asp) but also tRNA(Asn). Reaction proceeds in two steps: L-aspartate is first activated by ATP to form Asp-AMP and then transferred to the acceptor end of tRNA(Asp/Asn). The polypeptide is Aspartate--tRNA(Asp/Asn) ligase (Desulfotalea psychrophila (strain LSv54 / DSM 12343)).